We begin with the raw amino-acid sequence, 405 residues long: Terminal uridylyltransferase cid1 (405 aa).

UTP is bound at residue serine 90. Positions 101 and 103 each coordinate Mg(2+). Positions 168, 171, 172, 193, 197, 211, 212, and 336 each coordinate UTP. One can recognise a PAP-associated domain in the interval 267–336 (SLGSLLHGFF…AIEDPFEISH (70 aa)). Arginine 340 is a binding site for ATP. Residues 377 to 405 (APIPPRRQKKTDEQSNKKLLNETDGDNSE) form a disordered region. A compositionally biased stretch (basic and acidic residues) spans 386–397 (KTDEQSNKKLLN).

Belongs to the DNA polymerase type-B-like family. The cofactor is Mg(2+). Mn(2+) is required as a cofactor.

Its subcellular location is the cytoplasm. It carries out the reaction RNA(n) + UTP = RNA(n)-3'-uridine ribonucleotide + diphosphate. It catalyses the reaction RNA(n) + ATP = RNA(n)-3'-adenine ribonucleotide + diphosphate. In terms of biological role, cytoplasmic uridylyltransferase that mediates the terminal uridylation of mRNAs with short poly(A) tails such as such as act1, hcn1 and urg1 mRNAs, hence facilitating global mRNA decay. Uridylates the 3' ends of actin mRNAs upon S-phase arrest. Also has a weak poly(A) polymerase (PAP) activity. Residue His-336 is responsible for the specificity for UTP. Involved in cell cycle arrest where in association with crb2/rhp9 and chk1 it inhibits unscheduled mitosis. This chain is Terminal uridylyltransferase cid1, found in Schizosaccharomyces pombe (strain 972 / ATCC 24843) (Fission yeast).